A 197-amino-acid chain; its full sequence is OV-16 antigen (197 aa).

The N-terminal stretch at 1–16 is a signal peptide; sequence MHCLQVVIAIVLYSFG. 4 N-linked (GlcNAc...) asparagine glycosylation sites follow: asparagine 56, asparagine 61, asparagine 119, and asparagine 124.

The protein belongs to the phosphatidylethanolamine-binding protein family. In terms of tissue distribution, hypodermis, cuticle and uterus.

This Onchocerca volvulus protein is OV-16 antigen (OV16).